A 701-amino-acid chain; its full sequence is DNA ligase (701 aa).

NAD(+)-binding positions include aspartate 43 to aspartate 47, serine 92 to leucine 93, and glutamate 126. Catalysis depends on lysine 128, which acts as the N6-AMP-lysine intermediate. The NAD(+) site is built by arginine 149, glutamate 186, lysine 302, and lysine 326. Zn(2+)-binding residues include cysteine 420, cysteine 423, cysteine 444, and cysteine 450. The BRCT domain maps to alanine 623 to alanine 701.

Belongs to the NAD-dependent DNA ligase family. LigA subfamily. The cofactor is Mg(2+). It depends on Mn(2+) as a cofactor.

It catalyses the reaction NAD(+) + (deoxyribonucleotide)n-3'-hydroxyl + 5'-phospho-(deoxyribonucleotide)m = (deoxyribonucleotide)n+m + AMP + beta-nicotinamide D-nucleotide.. Its function is as follows. DNA ligase that catalyzes the formation of phosphodiester linkages between 5'-phosphoryl and 3'-hydroxyl groups in double-stranded DNA using NAD as a coenzyme and as the energy source for the reaction. It is essential for DNA replication and repair of damaged DNA. This is DNA ligase from Maricaulis maris (strain MCS10) (Caulobacter maris).